Here is a 350-residue protein sequence, read N- to C-terminus: Phosphate acyltransferase (350 aa).

Belongs to the PlsX family. As to quaternary structure, homodimer. Probably interacts with PlsY.

Its subcellular location is the cytoplasm. It carries out the reaction a fatty acyl-[ACP] + phosphate = an acyl phosphate + holo-[ACP]. It functions in the pathway lipid metabolism; phospholipid metabolism. Functionally, catalyzes the reversible formation of acyl-phosphate (acyl-PO(4)) from acyl-[acyl-carrier-protein] (acyl-ACP). This enzyme utilizes acyl-ACP as fatty acyl donor, but not acyl-CoA. This chain is Phosphate acyltransferase, found in Magnetococcus marinus (strain ATCC BAA-1437 / JCM 17883 / MC-1).